The primary structure comprises 1923 residues: Endoribonuclease Dicer (1923 aa).

Residues 51-227 form the Helicase ATP-binding domain; it reads LLEAALDHNT…ELEEKIQKLE (177 aa). 64–71 provides a ligand contact to ATP; that stretch reads LNTGSGKT. The short motif at 175-178 is the DECH box element; it reads DECH. The tract at residues 256–595 is required for interaction with PRKRA and TARBP2; that stretch reads DCGPFTDRSG…LRNKCSKSVD (340 aa). A disordered region spans residues 410 to 433; it reads VSWSDSEDDEEDEEIEEKEKPETN. 2 positions are modified to phosphoserine: S413 and S415. Acidic residues predominate over residues 414–425; that stretch reads DSEDDEEDEEIE. The 170-residue stretch at 433 to 602 folds into the Helicase C-terminal domain; it reads NFPSPFTNIL…SVDTGEADTE (170 aa). The region spanning 629-721 is the Dicer dsRNA-binding fold domain; it reads AIGHVNRYCA…MPVGKETVKY (93 aa). Residues 894 to 1041 enclose the PAZ domain; the sequence is KFMEDIEKSE…LVPELCAIHP (148 aa). 2 positions are modified to phosphoserine: S1015 and S1160. 2 stretches are compositionally biased toward polar residues: residues 1246–1255 and 1277–1290; these read NANTSTSDGS and SEQS…SRTL. A disordered region spans residues 1246–1291; that stretch reads NANTSTSDGSPVTAAVPGTTETGEAPPDRTASEQSPSPGYSSRTLG. The region spanning 1276–1404 is the RNase III 1 domain; the sequence is ASEQSPSPGY…TEKWEKDEMT (129 aa). Residues E1316, E1396, and E1399 each contribute to the Mg(2+) site. Residues S1461, S1469, and S1471 each carry the phosphoserine modification. The region spanning 1667-1825 is the RNase III 2 domain; sequence FENFEKKINY…LAGAIYMDSG (159 aa). Mg(2+)-binding residues include E1706, D1811, and E1814. One can recognise a DRBM domain in the interval 1853-1915; sequence SPVRELLEME…ARRALRSLKA (63 aa). Position 1869 is a phosphoserine (S1869).

The protein belongs to the helicase family. Dicer subfamily. In terms of assembly, component of the RISC loading complex (RLC), or micro-RNA (miRNA) loading complex (miRLC), which is composed of DICER1, AGO2 and TARBP2; DICER1 and TARBP2 are required to process precursor miRNAs (pre-miRNAs) to mature miRNAs and then load them onto AGO2. Note that the trimeric RLC/miRLC is also referred to as RISC. Interacts with DHX9, AGO1, PIWIL1 and PRKRA. Interacts with AGO2, TARBP2, EIF6, MOV10 and RPL7A (60S ribosome subunit); they form a large RNA-induced silencing complex (RISC). Interacts with BCDIN3D. Interacts (via Dicer dsRNA-binding fold domain) with ALOX5 (via PLAT domain); this interaction enhances arachidonate 5-lipoxygenase activity and modifies the miRNA precursor processing activity of DICER1. Mg(2+) serves as cofactor. Requires Mn(2+) as cofactor.

It is found in the cytoplasm. The enzyme catalyses Endonucleolytic cleavage to 5'-phosphomonoester.. In terms of biological role, double-stranded RNA (dsRNA) endoribonuclease playing a central role in short dsRNA-mediated post-transcriptional gene silencing. Cleaves naturally occurring long dsRNAs and short hairpin pre-microRNAs (miRNA) into fragments of twenty-one to twenty-three nucleotides with 3' overhang of two nucleotides, producing respectively short interfering RNAs (siRNA) and mature microRNAs. SiRNAs and miRNAs serve as guide to direct the RNA-induced silencing complex (RISC) to complementary RNAs to degrade them or prevent their translation. Gene silencing mediated by siRNAs, also called RNA interference, controls the elimination of transcripts from mobile and repetitive DNA elements of the genome but also the degradation of exogenous RNA of viral origin for instance. The miRNA pathway on the other side is a mean to specifically regulate the expression of target genes. The polypeptide is Endoribonuclease Dicer (DICER1) (Bos taurus (Bovine)).